We begin with the raw amino-acid sequence, 573 residues long: Phosphomethylpyrimidine synthase (573 aa).

Residues Asn-190, Met-219, Tyr-248, His-284, 304-306 (SRG), 345-348 (DGLR), and Glu-384 each bind substrate. His-388 provides a ligand contact to Zn(2+). Position 411 (Tyr-411) interacts with substrate. Residue His-452 coordinates Zn(2+). 3 residues coordinate [4Fe-4S] cluster: Cys-532, Cys-535, and Cys-540.

This sequence belongs to the ThiC family. [4Fe-4S] cluster serves as cofactor.

It carries out the reaction 5-amino-1-(5-phospho-beta-D-ribosyl)imidazole + S-adenosyl-L-methionine = 4-amino-2-methyl-5-(phosphooxymethyl)pyrimidine + CO + 5'-deoxyadenosine + formate + L-methionine + 3 H(+). Its pathway is cofactor biosynthesis; thiamine diphosphate biosynthesis. In terms of biological role, catalyzes the synthesis of the hydroxymethylpyrimidine phosphate (HMP-P) moiety of thiamine from aminoimidazole ribotide (AIR) in a radical S-adenosyl-L-methionine (SAM)-dependent reaction. This chain is Phosphomethylpyrimidine synthase, found in Geobacillus sp. (strain WCH70).